The primary structure comprises 88 residues: Small ribosomal subunit protein uS12 (88 aa).

Residues 1-24 (RKGRRDKIGKVKTAALKGSPQRRG) are disordered. Asp-81 carries the post-translational modification 3-methylthioaspartic acid.

It belongs to the universal ribosomal protein uS12 family. In terms of assembly, part of the 30S ribosomal subunit. Contacts proteins S8 and S17. May interact with IF1 in the 30S initiation complex.

Its function is as follows. With S4 and S5 plays an important role in translational accuracy. In terms of biological role, interacts with and stabilizes bases of the 16S rRNA that are involved in tRNA selection in the A site and with the mRNA backbone. Located at the interface of the 30S and 50S subunits, it traverses the body of the 30S subunit contacting proteins on the other side and probably holding the rRNA structure together. The combined cluster of proteins S8, S12 and S17 appears to hold together the shoulder and platform of the 30S subunit. The polypeptide is Small ribosomal subunit protein uS12 (rpsL) (Mycobacterium szulgai).